The sequence spans 339 residues: N-acetyl-gamma-glutamyl-phosphate reductase (339 aa).

C145 is an active-site residue.

This sequence belongs to the NAGSA dehydrogenase family. Type 1 subfamily.

It localises to the cytoplasm. It catalyses the reaction N-acetyl-L-glutamate 5-semialdehyde + phosphate + NADP(+) = N-acetyl-L-glutamyl 5-phosphate + NADPH + H(+). It functions in the pathway amino-acid biosynthesis; L-arginine biosynthesis; N(2)-acetyl-L-ornithine from L-glutamate: step 3/4. Functionally, catalyzes the NADPH-dependent reduction of N-acetyl-5-glutamyl phosphate to yield N-acetyl-L-glutamate 5-semialdehyde. This is N-acetyl-gamma-glutamyl-phosphate reductase from Kosmotoga olearia (strain ATCC BAA-1733 / DSM 21960 / TBF 19.5.1).